A 306-amino-acid polypeptide reads, in one-letter code: D-alanine--D-alanine ligase (306 aa).

In terms of domain architecture, ATP-grasp spans 101-300 (RIMLAAAGVP…FGELVTWMVE (200 aa)). 128-182 (MPTPYVLKPNAGGSSVGVFIVREDQAHPPQELTREDWPHGENLLAEEFIPGLELT) is an ATP binding site. 3 residues coordinate Mg(2+): Asp-250, Glu-267, and Asn-269.

This sequence belongs to the D-alanine--D-alanine ligase family. It depends on Mg(2+) as a cofactor. The cofactor is Mn(2+).

It is found in the cytoplasm. The catalysed reaction is 2 D-alanine + ATP = D-alanyl-D-alanine + ADP + phosphate + H(+). It participates in cell wall biogenesis; peptidoglycan biosynthesis. In terms of biological role, cell wall formation. The polypeptide is D-alanine--D-alanine ligase (Xanthobacter autotrophicus (strain ATCC BAA-1158 / Py2)).